The following is an 86-amino-acid chain: Mu-theraphotoxin-Hhn1b 1 (86 aa).

Positions Met1–Ala21 are cleaved as a signal peptide. A propeptide spanning residues Ser22–Arg49 is cleaved from the precursor. 3 disulfides stabilise this stretch: Cys51–Cys66, Cys58–Cys73, and Cys65–Cys80. Ile84 carries the post-translational modification Isoleucine amide.

Belongs to the neurotoxin 10 (Hwtx-1) family. 22 (Htx-4) subfamily. Monomer. Expressed by the venom gland.

It localises to the secreted. In terms of biological role, neurotoxin that selectively inhibits neuronal tetrodotoxin-sensitive voltage-gated sodium channels (Nav) (IC(50)=44.6 nM). It is active on Nav1.2/SCN2A (IC(50)=22.4 nM), Nav1.6/SCN8A (IC(50)=50.1 nM) and Nav1.7/SCN9A (IC(50)=48.9 nM). It shows low affinity for lipid bilayers. The chain is Mu-theraphotoxin-Hhn1b 1 from Cyriopagopus hainanus (Chinese bird spider).